A 488-amino-acid polypeptide reads, in one-letter code: MKYSDLRDFLRALEARGELKRIQTPVSPILEMTEICDRTLRRSGPALLFEKPIGFDMPVLGNLFGTPQRVAFGMGAEDVSELREIGRLLALLKEPEPPKGLKDAWDKLPLFKKVLSMAPKVLKDAPCQEVILEGEDVDLGRLPVQHCWPGDAAPLITWGLTITRGPNKERQNLGIYRQQVLGRNKVIMRWLSHRGGALDYREWCQKHPDRPYPVAVALGADPATILGAVTPVPDTLSEYAFAGLLRGQRTELVKAVGSDLQVPASAEIVLEGHIHPGEMADEGPYGDHTGYYNEVDRFPVFTIERITRRRDAIYHSTYTGRPPDEPAVLGVALNEVFVPILQKQFPEIVDFYLPPEGCSYRMAVVTIRKQYPGHAKRVMLGVWSFLRQFMYTKFVIVTDDDIDARDWNDVIWAITTRMDPKRDTVLIDNTPIDYLDFASPVSGLGSKMGLDATHKWPGETSREWGRAIRQDPAVKQRVDELWPLLGLD.

Residue Asn-172 coordinates Mn(2+). Prenylated FMN-binding positions include 175-177, 189-191, and 194-195; these read IYR, RWL, and RG. Residue Glu-238 participates in Mn(2+) binding. Catalysis depends on Asp-287, which acts as the Proton donor.

The protein belongs to the UbiD family. As to quaternary structure, homohexamer. Prenylated FMN serves as cofactor. Requires Mn(2+) as cofactor.

Its subcellular location is the cell membrane. The enzyme catalyses a 4-hydroxy-3-(all-trans-polyprenyl)benzoate + H(+) = a 2-(all-trans-polyprenyl)phenol + CO2. The protein operates within cofactor biosynthesis; ubiquinone biosynthesis. In terms of biological role, catalyzes the decarboxylation of 3-octaprenyl-4-hydroxy benzoate to 2-octaprenylphenol, an intermediate step in ubiquinone biosynthesis. This Azotobacter vinelandii (strain DJ / ATCC BAA-1303) protein is 3-octaprenyl-4-hydroxybenzoate carboxy-lyase.